The sequence spans 187 residues: Elongation factor P (187 aa).

The protein belongs to the elongation factor P family.

The protein localises to the cytoplasm. Its pathway is protein biosynthesis; polypeptide chain elongation. Its function is as follows. Involved in peptide bond synthesis. Stimulates efficient translation and peptide-bond synthesis on native or reconstituted 70S ribosomes in vitro. Probably functions indirectly by altering the affinity of the ribosome for aminoacyl-tRNA, thus increasing their reactivity as acceptors for peptidyl transferase. This Magnetococcus marinus (strain ATCC BAA-1437 / JCM 17883 / MC-1) protein is Elongation factor P.